The primary structure comprises 170 residues: Cathelicidin antimicrobial peptide (170 aa).

Residues 1-30 (MKTQRDGHSLGGWSLMLLLLGLLMPLAIVA) form the signal peptide. Positions 31-131 (QVLSYKEAVL…DISCDKDNRR (101 aa)) are cleaved as a propeptide — cathelin-like domain (CLD). Cystine bridges form between C86–C97 and C108–C125. Residues 150–162 (FKRIVQRIKDFLQ) are active core.

Belongs to the cathelicidin family. Monomer, homodimer or homotrimer (in vitro). Oligomerizes as tetra- or hexamer in solution (in vitro). Post-translationally, proteolytically cleaved by proteinase PRTN3 into antibacterial peptide LL-37. Proteolytically cleaved by cathepsin CTSG and neutrophil elastase ELANE. Resistant to proteolytic degradation in solution, and when bound to both zwitterionic (mimicking mammalian membranes) and negatively charged membranes (mimicking bacterial membranes). In terms of processing, after secretion onto the skin surface, the CAMP gene product is processed by a serine protease-dependent mechanism into multiple novel antimicrobial peptides distinct from and shorter than cathelicidin LL-37. These peptides show enhanced antimicrobial action, acquiring the ability to kill skin pathogens such as S.aureus, E.coli and C.albicans. These peptides have lost the ability to stimulate CXCL8/IL8 release from keratinocytes. The peptides act synergistically, killing bacteria at lower concentrations when present together, and maintain activity at increased salt condition.

Its subcellular location is the secreted. It is found in the vesicle. Functionally, antimicrobial protein that is an integral component of the innate immune system. Binds to bacterial lipopolysaccharides (LPS). Acts via neutrophil N-formyl peptide receptors to enhance the release of CXCL2. Postsecretory processing generates multiple cathelicidin antimicrobial peptides with various lengths which act as a topical antimicrobial defense in sweat on skin. The unprocessed precursor form, cathelicidin antimicrobial peptide, inhibits the growth of Gram-negative E.coli and E.aerogenes with efficiencies comparable to that of the mature peptide LL-37 (in vitro). In terms of biological role, antimicrobial peptide that is an integral component of the innate immune system. Binds to bacterial lipopolysaccharides (LPS). Causes membrane permeabilization by forming transmembrane pores (in vitro). Causes lysis of E.coli. Exhibits antimicrobial activity against Gram-negative bacteria such as P.aeruginosa, S.typhimurium, E.aerogenes, E.coli and P.syringae, Gram-positive bacteria such as L.monocytogenes, S.epidermidis, S.pyogenes and S.aureus, as well as vancomycin-resistant enterococci (in vitro). Exhibits antimicrobial activity against methicillin-resistant S.aureus, P.mirabilis, and C.albicans in low-salt media, but not in media containing 100 mM NaCl (in vitro). Forms chiral supramolecular assemblies with quinolone signal (PQS) molecules of P.aeruginosa, which may lead to interference of bacterial quorum signaling and perturbance of bacterial biofilm formation. May form supramolecular fiber-like assemblies on bacterial membranes. Induces cytokine and chemokine producation as well as TNF/TNFA and CSF2/GMCSF production in normal human keratinocytes. Exhibits hemolytic activity against red blood cells. Its function is as follows. Exhibits antimicrobial activity against E.coli and B.megaterium (in vitro). This chain is Cathelicidin antimicrobial peptide, found in Hylobates moloch (Silvery gibbon).